Here is a 218-residue protein sequence, read N- to C-terminus: Large ribosomal subunit protein uL3 (218 aa).

The disordered stretch occupies residues 124-162 (KRHGFSRGPMTHGSKNHREPGSTGAGTTPGRIYPGKRMA).

This sequence belongs to the universal ribosomal protein uL3 family. In terms of assembly, part of the 50S ribosomal subunit. Forms a cluster with proteins L14 and L19.

Functionally, one of the primary rRNA binding proteins, it binds directly near the 3'-end of the 23S rRNA, where it nucleates assembly of the 50S subunit. The chain is Large ribosomal subunit protein uL3 from Synechococcus sp. (strain CC9605).